A 605-amino-acid polypeptide reads, in one-letter code: MSTMFLRTLREDPADADVVSDKLLQRACYLRKAAPGIWTWLPLGLNVLNKIENIIREEMASIDAQEVHFSGLLPREPYEATHRWEEYGDNIFRLKDRHEADYLLAPTHEEMFTLLVKDLYSSYKDLPVTLYQIQTKYRDEFRPRAGLIRGREFIMKDAYSFTLDKEGLVKAYMDERGAYERIFNRLDLKYVPVHAMAGPMGGFESEEFLAPMEIGEDTFAQSPSGKAWNVEALTTPEPEAIDFTATPAAEKRPTPDAATIDKMVEFANANHPRSDGRDWQASDILKNVVIAVMHPQDEDHDEPWRELVVVGVPGDRTVDMKRLEAQFTPAEIEEATDEDLKKHPELVKGYIGPMALGPQARDGKKAENASETGDALRYLIDAHVARGSAWFTGADEQDVDYYDLVYGRDFEADGTVEAVQVRHGDMSPDGSGPLSFERGVEIGQVFQLGLKYSNALGLKVLDQNGKTVPVWMGSYGIGVSRVMACIAETHHDEKGLAWPAVIAPAQVHVVATGKDAAAFEAAEQLIGELEAKGIEVIFDDRKKVSPGVKFKDAELIGVPIIAVAGRDTVNNGTIEVRDRNGENAEAVPVADAAQAIADRVAALLK.

Belongs to the class-II aminoacyl-tRNA synthetase family. ProS type 1 subfamily. As to quaternary structure, homodimer.

It localises to the cytoplasm. It catalyses the reaction tRNA(Pro) + L-proline + ATP = L-prolyl-tRNA(Pro) + AMP + diphosphate. Its function is as follows. Catalyzes the attachment of proline to tRNA(Pro) in a two-step reaction: proline is first activated by ATP to form Pro-AMP and then transferred to the acceptor end of tRNA(Pro). As ProRS can inadvertently accommodate and process non-cognate amino acids such as alanine and cysteine, to avoid such errors it has two additional distinct editing activities against alanine. One activity is designated as 'pretransfer' editing and involves the tRNA(Pro)-independent hydrolysis of activated Ala-AMP. The other activity is designated 'posttransfer' editing and involves deacylation of mischarged Ala-tRNA(Pro). The misacylated Cys-tRNA(Pro) is not edited by ProRS. The polypeptide is Proline--tRNA ligase (Bifidobacterium adolescentis (strain ATCC 15703 / DSM 20083 / NCTC 11814 / E194a)).